The chain runs to 273 residues: Orotidine 5'-phosphate decarboxylase (273 aa).

Lys96 (proton donor) is an active-site residue.

Belongs to the OMP decarboxylase family. Type 2 subfamily.

It carries out the reaction orotidine 5'-phosphate + H(+) = UMP + CO2. It functions in the pathway pyrimidine metabolism; UMP biosynthesis via de novo pathway; UMP from orotate: step 2/2. The chain is Orotidine 5'-phosphate decarboxylase from Nocardioides sp. (strain ATCC BAA-499 / JS614).